The sequence spans 854 residues: Envelope glycoprotein B (854 aa).

The first 30 residues, 1–30 (MSKNWFPLLCASVLVVYVSIASSSTGTASG), serve as a signal peptide directing secretion. At 31–723 (AVTPTSPTEN…EGVVGFIKNP (693 aa)) the chain is on the virion surface side. 3 N-linked (GlcNAc...) asparagine; by host glycosylation sites follow: asparagine 40, asparagine 48, and asparagine 60. 5 cysteine pairs are disulfide-bonded: cysteine 69–cysteine 524, cysteine 86–cysteine 480, cysteine 160–cysteine 225, cysteine 317–cysteine 364, and cysteine 546–cysteine 583. The interval 127–133 (SYSFIRE) is involved in fusion and/or binding to host membrane. Asparagine 183 carries N-linked (GlcNAc...) asparagine; by host glycosylation. The tract at residues 212 to 219 (GSTWLYTT) is involved in fusion and/or binding to host membrane. Residues asparagine 256, asparagine 275, asparagine 314, asparagine 356, asparagine 378, asparagine 382, asparagine 390, asparagine 423, asparagine 426, asparagine 442, asparagine 558, and asparagine 595 are each glycosylated (N-linked (GlcNAc...) asparagine; by host). Hydrophobic membrane proximal region regions lie at residues 669 to 721 (VEGK…GFIK) and 700 to 720 (VAIG…VGFI). The chain crosses the membrane as a helical span at residues 724–744 (FGSFTVILFLLAVLGVIYLIY). At 745 to 854 (MRQKRAYEKP…YQKIQNEYEV (110 aa)) the chain is on the intravirion side.

It belongs to the herpesviridae glycoprotein B family. In terms of assembly, homotrimer; disulfide-linked. Binds to heparan sulfate proteoglycans. Interacts with gH/gL heterodimer. In terms of processing, a proteolytic cleavage by host furin generates two subunits that remain linked by disulfide bonds.

The protein localises to the virion membrane. The protein resides in the host cell membrane. It localises to the host endosome membrane. Its subcellular location is the host Golgi apparatus membrane. Its function is as follows. Envelope glycoprotein that forms spikes at the surface of virion envelope. Essential for the initial attachment to heparan sulfate moieties of the host cell surface proteoglycans. Involved in fusion of viral and cellular membranes leading to virus entry into the host cell. Following initial binding to its host receptors, membrane fusion is mediated by the fusion machinery composed at least of gB and the heterodimer gH/gL. May be involved in the fusion between the virion envelope and the outer nuclear membrane during virion egress. The chain is Envelope glycoprotein B from Macaca mulatta (Rhesus macaque).